The sequence spans 345 residues: Fructose-bisphosphate aldolase, plasmid (345 aa).

Position 50 (Ser50) interacts with D-glyceraldehyde 3-phosphate. Residue Asp83 is the Proton donor of the active site. 4 residues coordinate Zn(2+): His84, Asp105, Glu142, and His198. Gly199 lines the dihydroxyacetone phosphate pocket. His232 contributes to the Zn(2+) binding site. Dihydroxyacetone phosphate-binding positions include 233 to 235 (GSS) and 275 to 278 (NIDT).

Belongs to the class II fructose-bisphosphate aldolase family. Homodimer. Requires Zn(2+) as cofactor.

The enzyme catalyses beta-D-fructose 1,6-bisphosphate = D-glyceraldehyde 3-phosphate + dihydroxyacetone phosphate. Its pathway is carbohydrate biosynthesis; Calvin cycle. It functions in the pathway carbohydrate degradation; glycolysis; D-glyceraldehyde 3-phosphate and glycerone phosphate from D-glucose: step 4/4. Functionally, catalyzes the aldol condensation of dihydroxyacetone phosphate (DHAP or glycerone-phosphate) with glyceraldehyde 3-phosphate (G3P) to form fructose 1,6-bisphosphate (FBP) in gluconeogenesis and the reverse reaction in glycolysis. This is Fructose-bisphosphate aldolase, plasmid (cbbAP) from Cupriavidus necator (strain ATCC 17699 / DSM 428 / KCTC 22496 / NCIMB 10442 / H16 / Stanier 337) (Ralstonia eutropha).